We begin with the raw amino-acid sequence, 1091 residues long: Voltage-dependent calcium channel subunit alpha-2/delta-3 (1091 aa).

An N-terminal signal peptide occupies residues 1 to 33; the sequence is MAGPGSLCCASRGASALLATALLYAALGDVVRS. Topologically, residues 34 to 1068 are extracellular; sequence EQQIPLSVVK…HPEENARECG (1035 aa). Residue Asn-166 is glycosylated (N-linked (GlcNAc...) asparagine). The 183-residue stretch at 256 to 438 folds into the VWFA domain; it reads DVVILVDVSG…ENVMEYLHVL (183 aa). Positions 262, 264, and 266 each coordinate a divalent metal cation. The MIDAS-like motif signature appears at 262 to 266; sequence DVSGS. The N-linked (GlcNAc...) asparagine glycan is linked to Asn-309. Cys-412 and Cys-1055 are disulfide-bonded. The region spanning 452–549 is the Cache domain; it reads WTEAYIDSTL…RPLYEEGKKR (98 aa). Residues Asn-553 and Asn-632 are each glycosylated (N-linked (GlcNAc...) asparagine). Tyr-924 is subject to Phosphotyrosine. Residues 1069–1089 traverse the membrane as a helical segment; that stretch reads GASSLQAQAALLLLPLVSSLF. Topologically, residues 1090–1091 are cytoplasmic; sequence SR.

Belongs to the calcium channel subunit alpha-2/delta family. In terms of assembly, dimer formed of alpha-2-2 and delta-2 chains; disulfide-linked. Voltage-dependent calcium channels are multisubunit complexes, consisting of alpha-1 (CACNA1), alpha-2 (CACNA2D), beta (CACNB) and delta (CACNA2D) subunits in a 1:1:1:1 ratio. In terms of processing, N-glycosylated. Post-translationally, may be proteolytically processed into subunits alpha-2-3 and delta-3 that are disulfide-linked. It is however unclear whether such cleavage really takes place in vivo and has a functional role. As to expression, brain-specific. Predominantly expressed in the caudate putamen, entorhinal complex, hippocampus and cortex.

It localises to the membrane. The alpha-2/delta subunit of voltage-dependent calcium channels regulates calcium current density and activation/inactivation kinetics of the calcium channel. Acts as a regulatory subunit for P/Q-type calcium channel (CACNA1A), N-type (CACNA1B), L-type (CACNA1C OR CACNA1D) but not T-type (CACNA1G). This is Voltage-dependent calcium channel subunit alpha-2/delta-3 (Cacna2d3) from Mus musculus (Mouse).